The sequence spans 248 residues: Cyclin-Q (248 aa).

The residue at position 1 (Met-1) is an N-acetylmethionine. Residues 1-12 are compositionally biased toward gly residues; sequence MEAPEGGGGGPA. The segment at 1–21 is disordered; it reads MEAPEGGGGGPAARGPEGQPA.

The protein belongs to the cyclin family. Cyclin-like FAM58 subfamily. In terms of assembly, associates with CDK10 to promote its kinase activity. Interacts with SALL1.

Activating cyclin for the cyclin-associated kinase CDK10. This is Cyclin-Q from Homo sapiens (Human).